We begin with the raw amino-acid sequence, 520 residues long: GMP synthase [glutamine-hydrolyzing] (520 aa).

In terms of domain architecture, Glutamine amidotransferase type-1 spans 12–205 (KIIVLDYGSQ…AVNICGARGD (194 aa)). C89 acts as the Nucleophile in catalysis. Catalysis depends on residues H179 and E181. In terms of domain architecture, GMPS ATP-PPase spans 206 to 395 (WSMDNFIDME…LGMPDEVVWR (190 aa)). Residue 233–239 (SGGVDSS) participates in ATP binding.

As to quaternary structure, homodimer.

It carries out the reaction XMP + L-glutamine + ATP + H2O = GMP + L-glutamate + AMP + diphosphate + 2 H(+). Its pathway is purine metabolism; GMP biosynthesis; GMP from XMP (L-Gln route): step 1/1. Its function is as follows. Catalyzes the synthesis of GMP from XMP. This Streptococcus agalactiae serotype III (strain NEM316) protein is GMP synthase [glutamine-hydrolyzing].